The following is a 658-amino-acid chain: uncharacterized protein (658 aa).

Residues 516-639 are compositionally biased toward low complexity; that stretch reads SSNNSNSSNN…NNNNNSSQGG (124 aa). A disordered region spans residues 516 to 646; it reads SSNNSNSSNN…QGGNSQGGSG (131 aa).

The protein resides in the cytoplasm. This is an uncharacterized protein from Schizosaccharomyces pombe (strain 972 / ATCC 24843) (Fission yeast).